Here is a 442-residue protein sequence, read N- to C-terminus: Large ribosomal subunit protein mL65 (442 aa).

This sequence belongs to the mitochondrion-specific ribosomal protein mL65 family. Component of the mitochondrial ribosome small subunit (28S) which comprises a 12S rRNA and about 30 distinct proteins.

The protein localises to the mitochondrion. This Mus musculus (Mouse) protein is Large ribosomal subunit protein mL65 (Mrps30).